The sequence spans 379 residues: Stimulator of interferon genes protein (379 aa).

Topologically, residues 1–23 (MPQDPSTRSSPARLLIPEPRAGR) are cytoplasmic. A helical membrane pass occupies residues 24–40 (ARHAACVLLAVCFVVLF). Topologically, residues 41–50 (LSGEPLAPII) are lumenal. A helical transmembrane segment spans residues 51 to 75 (RSVCTQLAALQLGVLLKGCCCLAEE). The Cytoplasmic portion of the chain corresponds to 76–97 (IFHLHSRHHGSLWQVLCSCFPP). The chain crosses the membrane as a helical span at residues 98 to 111 (RWYLALLLVGGSAY). Topologically, residues 112–121 (LDPPEDNGHS) are lumenal. Residues 122 to 139 (PRLALTLSCLCQLLVLAL) form a helical membrane-spanning segment. Residues 140 to 379 (GLQKLSAVEV…LPQPLRSDCP (240 aa)) lie on the Cytoplasmic side of the membrane. Residues 158–345 (KNVAHGLAWS…WHLQQQQREE (188 aa)) form a cyclic dinucleotide-binding domain (CBD) region. 3',3'-c-di-GMP is bound by residues serine 167, tyrosine 172, 243-246 (RVYK), and serine 268. Residues 167–172 (SYYIGY), 243–246 (RVYK), and serine 268 contribute to the 2',3'-cGAMP site. The pLxIS motif motif lies at 363–366 (LQVS). Serine 366 bears the Phosphoserine; by TBK1 mark.

Belongs to the STING family. Homodimer; forms a homodimer in absence of cyclic nucleotide (c-di-GMP or cGAMP). Homotetramer; in presence of cyclic nucleotide (c-di-GMP or cGAMP), forms tetramers and higher-order oligomers through side-by-side packing. Interacts (when phosphorylated) with IRF3; following activation and phosphorylation on the pLxIS motif by TBK1, recruits IRF3. In terms of processing, phosphorylation by TBK1 leads to activation and production of IFN-beta. Following cyclic nucleotide (c-di-GMP or cGAMP)-binding, activation and translocation from the endoplasmic reticulum, STING1 is phosphorylated by TBK1 at Ser-366 in the pLxIS motif. The phosphorylated pLxIS motif constitutes an IRF3-binding motif, leading to recruitment of the transcription factor IRF3 to induce type-I interferons and other cytokines.

It is found in the endoplasmic reticulum membrane. Its subcellular location is the cytoplasm. The protein resides in the perinuclear region. The protein localises to the endoplasmic reticulum-Golgi intermediate compartment membrane. It localises to the golgi apparatus membrane. It is found in the cytoplasmic vesicle. Its subcellular location is the autophagosome membrane. The enzyme catalyses H(+)(in) = H(+)(out). Functionally, facilitator of innate immune signaling that acts as a sensor of cytosolic DNA from bacteria and viruses and promotes the production of type I interferon (IFN-alpha and IFN-beta). Innate immune response is triggered in response to non-CpG double-stranded DNA from viruses and bacteria delivered to the cytoplasm. Acts by binding cyclic dinucleotides: recognizes and binds cyclic di-GMP (c-di-GMP), a second messenger produced by bacteria, and cyclic GMP-AMP (cGAMP), a messenger produced by CGAS in response to DNA virus in the cytosol. Upon binding of c-di-GMP or cGAMP, STING1 oligomerizes and is able to activate both NF-kappa-B and IRF3 transcription pathways to induce expression of type I interferon and exert a potent anti-viral state. Exhibits 2',3' phosphodiester linkage-specific ligand recognition: can bind both 2'-3' linked cGAMP and 3'-3' linked cGAMP but is preferentially activated by 2'-3' linked cGAMP. In addition to promote the production of type I interferons, plays a direct role in autophagy. Following cGAMP-binding, STING1 buds from the endoplasmic reticulum into COPII vesicles, which then form the endoplasmic reticulum-Golgi intermediate compartment (ERGIC). The ERGIC serves as the membrane source for LC3 lipidation, leading to formation of autophagosomes that target cytosolic DNA or DNA viruses for degradation by the lysosome. Promotes autophagy by acting as a proton channel that directs proton efflux from the Golgi to facilitate LC3 lipidation. The autophagy- and interferon-inducing activities can be uncoupled and autophagy induction is independent of TBK1 phosphorylation. The chain is Stimulator of interferon genes protein from Gallus gallus (Chicken).